The primary structure comprises 405 residues: Solute carrier family 35 member E2A (405 aa).

A disordered region spans residues 1-22; it reads MSAAAKSQVPEEAAPGCEEEPK. The next 10 helical transmembrane spans lie at 76 to 96, 106 to 126, 142 to 162, 167 to 187, 195 to 215, 219 to 241, 264 to 284, 296 to 316, 326 to 346, and 347 to 367; these read LIYL…NKYI, MLGA…IFVP, FIMT…LGLV, VAVS…VIMS, TGLL…LCTA, SFNI…QNVF, AAAV…PVIG, IVLL…TAYA, FSVA…IVFG, and NKIT…VLLY. Residues 380 to 405 are disordered; that stretch reads SLVTATSRNPEDDTEPLVPQDSRQHH.

It belongs to the TPT transporter family. SLC35E subfamily.

It is found in the membrane. In terms of biological role, putative transporter. The sequence is that of Solute carrier family 35 member E2A (Slc35e2a) from Mus musculus (Mouse).